Reading from the N-terminus, the 1516-residue chain is MACTTVNVGSCVWVEDPEVAWIDGEVIEVKGSDIKVKCTSGKTVAIKVSSAYPKDVEAPASGVDDMTRLAYLHEPGVLQNMKSRFDINEIYTYTGNILIAVNPFRRLPHLYNNHMMQQYKGAGFGELSPHPFAVADAAYRQMKNQGISQSILVSGESGAGKTETTKLLMQYLADMGGRAVSEGRTVEKKVLESNPVLEAFGNAKTVRNNNSSRFGKFVEIQFDQRGRISGAAIRTYLLERSRVCQVSDPERNYHCFYMLCAAPPEDIKKWKLADPRKFHYLNQSQCIELERMDDAKEYRETRKAMDVVGINSEEQEAIFQVVAAILHLGNVEFGKGKEADSSAPKDDTSNYHLKTAAELFMCDEQALEDSLCKRVIVTRGETITKCLDQESAALSRDALAKTVYSRLFDWIVNKINDSIGQDPDSEYLIGVLDIYGFESFKTNSFEQFCINLTNEKLQQHFNQHVFKMEQDEYNKEEIDWSYIEFVDNQEILDLIEKKAGGIISLLNEACMFPRATHETFAEKMYQTFKDHKHFSKPKLSRTDFTICHYAGDVTYQTEQFLEKNKDYVVAEHQTLLNASRCAFVASLFPLLAEDANKKSKFSSISSRFKQQLVTLLETLSTTEPHYIRCVKPNNLLKPLIFENQNVLQQLRCGGVMEAIRISCAGFPTRKKFEEFLERFSVLAPEVLDKSTDGWPLSSTDDVACKKLLEKVALQGYQIGKTKVFLRAGQMADLDARRNEVLGRAASRIQRKFRSYLSRKTFLMLRKVATNMQAVCRGQLSRLIFEGLRRDAAVLEIQRDIRMHLARKSYKELYFAAVSIQLGIRGMASRGRLRFQRQDKAAIMIQSHCRKFLAQLHYQRLKKAAITTQSAWRARLARKELRKLKMAAKETGVLEAAKSKLEKQVEELTWKLQLEKRMRTDMEESKTQENAKLRSALEEMQLQFKETKALHLQEVEAAKKMAETVPVLQEVPVVDTELVEKLTSENEKLKSLVSSLDQKIDETEKKFEERSKINEERLKQAIEAETTIVNLKTAVHELQEKILDVESENKILRQKSLIQASGHLPPTPVKGSQNGHFSSKESPFNGSEIETLARTQEQESDAKTRRYHLDRQRENIGALINCVVNNIGFNQGKPVAAFTIYKCLLHWKSFEAERTSVFDRLVQMIGSAIKDEGDNEHLAYWLSNTSTLLFMIQQSLKPGATPQQKTPVSTSLFGRMAMGFRSAPSSAETSAAAEAAAAAVIRPVVAKDPALLFKQQLTAYVEKIFGMIRDNLKNELQTLLSLCIQAPRTSTGRSLRSFRSSKTMRNNSPLDHWNGIYDGLNAILSTLQENFVPPVLIQNIFIQTFSFINVQLFNSLLLRRECCTFSNGEFVKSGLALLEEWCNETTEEYAGSSWDELKHIRQAVGFMVIHKKYRISYDDIAHDLCPILSVQQLYRICTLYWDDSYNTRSVSQDVIANMRVLMTEDSNNADSSAFLLDEDSSIPFSADDLSSSMKEKDFAEMKPAEELEENPAFSFLI.

The Myosin N-terminal SH3-like domain occupies 7–56 (NVGSCVWVEDPEVAWIDGEVIEVKGSDIKVKCTSGKTVAIKVSSAYPKDV). The region spanning 61–738 (SGVDDMTRLA…QMADLDARRN (678 aa)) is the Myosin motor domain. Residues 155 to 162 (GESGAGKT) and 208 to 216 (NNNSSRFGK) contribute to the ATP site. Actin-binding regions lie at residues 494–528 (LIEK…YQTF), 530–553 (DHKH…AGDV), 588–612 (FPLL…KQQL), and 612–634 (LVTL…KPNN). IQ domains follow at residues 741-770 (LGRA…VATN), 764-793 (LRKV…DAAV), 789-818 (RDAA…AAVS), 812-841 (LYFA…DKAA), 837-866 (QDKA…AAIT), and 860-889 (LKKA…AAKE). Positions 890 to 1056 (TGVLEAAKSK…ENKILRQKSL (167 aa)) form a coiled coil. The disordered stretch occupies residues 1061–1085 (GHLPPTPVKGSQNGHFSSKESPFNG). The span at 1069-1084 (KGSQNGHFSSKESPFN) shows a compositional bias: polar residues. A Dilute domain is found at 1158–1463 (DRLVQMIGSA…IANMRVLMTE (306 aa)).

The protein belongs to the TRAFAC class myosin-kinesin ATPase superfamily. Myosin family. Plant myosin class XI subfamily. In terms of assembly, homodimer.

Its function is as follows. Myosin heavy chain that is required for the cell cycle-regulated transport of various organelles and proteins for their segregation. Functions by binding with its tail domain to receptor proteins on organelles and exerting force with its N-terminal motor domain against actin filaments, thereby transporting its cargo along polarized actin cables. This Arabidopsis thaliana (Mouse-ear cress) protein is Myosin-14 (XI-H).